The chain runs to 228 residues: Tungstate uptake system permease protein TupB (228 aa).

Transmembrane regions (helical) follow at residues 25-45, 65-85, 102-122, 144-164, and 203-223; these read IIFLSVFVSSTATAIAAAVSI, VLYSLMSVPSVIVGLVVAIGL, AMIIAQALLVFPLCLGLTYSL, VIILIIRELKAELFINVVTTF, and MAIALGLVLLMISFAINAVIY. Positions 26–222 constitute an ABC transmembrane type-1 domain; it reads IFLSVFVSST…MISFAINAVI (197 aa).

It belongs to the binding-protein-dependent transport system permease family. As to quaternary structure, the complex is composed of two ATP-binding proteins (TupC), two transmembrane proteins (TupB) and a solute-binding protein (TupA).

The protein resides in the cell membrane. Its function is as follows. Part of an ABC transporter complex involved in tungstate uptake. Probably responsible for the translocation of the substrate across the membrane. This chain is Tungstate uptake system permease protein TupB, found in Peptoclostridium acidaminophilum (Eubacterium acidaminophilum).